The sequence spans 156 residues: MAKEIILTQEGIEELKHELKHLLEVVRPQVIEELVEARNQGDLSENADYDAARNRQAEVEARIKELETMISKAKLIEDSSTTDGAIKIGSKVKFIMLNTKQTREVKIVGAVEADPFKGLISNESPIAKAILGKKVGESVEVKDINAPYSIEIKEVN.

A coiled-coil region spans residues 2 to 78 (AKEIILTQEG…MISKAKLIED (77 aa)).

The protein belongs to the GreA/GreB family.

Functionally, necessary for efficient RNA polymerase transcription elongation past template-encoded arresting sites. The arresting sites in DNA have the property of trapping a certain fraction of elongating RNA polymerases that pass through, resulting in locked ternary complexes. Cleavage of the nascent transcript by cleavage factors such as GreA or GreB allows the resumption of elongation from the new 3'terminus. GreA releases sequences of 2 to 3 nucleotides. This Mesoplasma florum (strain ATCC 33453 / NBRC 100688 / NCTC 11704 / L1) (Acholeplasma florum) protein is Transcription elongation factor GreA.